The primary structure comprises 103 residues: Sec-independent protein translocase protein TatA (103 aa).

Residues 1 to 21 (MGNIFSPTHLIIILLLILLLF) form a helical membrane-spanning segment. The disordered stretch occupies residues 48-103 (EESIEDKVEMADTSQVINEESQQSQPLSVKRAAIRRKASSDSKGGKASIAKKQRVK). The segment covering 59 to 74 (DTSQVINEESQQSQPL) has biased composition (polar residues).

This sequence belongs to the TatA/E family. In terms of assembly, the Tat system comprises two distinct complexes: a TatABC complex, containing multiple copies of TatA, TatB and TatC subunits, and a separate TatA complex, containing only TatA subunits. Substrates initially bind to the TatABC complex, which probably triggers association of the separate TatA complex to form the active translocon.

Its subcellular location is the cell inner membrane. Functionally, part of the twin-arginine translocation (Tat) system that transports large folded proteins containing a characteristic twin-arginine motif in their signal peptide across membranes. TatA could form the protein-conducting channel of the Tat system. The chain is Sec-independent protein translocase protein TatA from Bartonella tribocorum (strain CIP 105476 / IBS 506).